A 575-amino-acid chain; its full sequence is Transcription factor ncaA (575 aa).

2 stretches are compositionally biased toward polar residues: residues 1–15 (MAETTPSRPNDTPEN) and 22–34 (DNQSQSAGQSKNP). Disordered regions lie at residues 1-40 (MAETTPSRPNDTPENSPGGGDDNQSQSAGQSKNPASVKDR) and 79-114 (IRSGITRRQARTSSGKRDTPERAMGKGPSEHFAGGE). The UBZ4-type; degenerate zinc-finger motif lies at 39–66 (DRKCQYCHQAFTSSSLGRHLDQYLFKKK). A compositionally biased stretch (basic and acidic residues) spans 93–102 (GKRDTPERAM). Residues 337–371 (FAREVEKRKTLDEQLARVQQEANQLRAQVEKLGSC) adopt a coiled-coil conformation. A disordered region spans residues 429-575 (GRVGVGYGNP…ASGPPPSSGA (147 aa)). Residues 440–454 (LDDRSSADTKARATE) are compositionally biased toward basic and acidic residues. Low complexity predominate over residues 455 to 471 (EPPASAALASTSTSAPP). A compositionally biased stretch (pro residues) spans 472-485 (SAHPPPRALQPAPG). Composition is skewed to polar residues over residues 493–513 (DQSSSHTGGASAPSSQNTSPY) and 538–558 (SAANPSATAPNTWNPHSHQSL).

Interacts with atrR.

The protein resides in the nucleus. Functionally, transcription factor required for normal voriconazole resistance. Contributes to the function of atrR and regulates the expression of the atrR target gene abcG1. This chain is Transcription factor ncaA, found in Aspergillus fumigatus (strain ATCC MYA-4609 / CBS 101355 / FGSC A1100 / Af293) (Neosartorya fumigata).